Here is a 363-residue protein sequence, read N- to C-terminus: MSNNYHIAVLPGDGIGPEVMAQAYKILDAIRKRFNICITTSEYDVGGIAIDRHGCSLPAKTVAGCEQADAILFGSVGGPKWEHLPPAEQPERGALLPLRKHFKLFSNLRPARLYAGLEVFCPLRNDIAAKGFDILCVRELTGGIYFGQPKGREGQGKYERAFDTEVYHRFEIERIARIAFESARKRSNKVTSIDKANVLQSSVLWREVVTEIAKAYPDVEINHMYIDNATMQLIKDPSQFDVMLCSNIFGDILSDECAMITGSMGMLPSASLNEKGFGLYEPAGGSAPDIAGKGIANPIAQILSAALLLRYSLGHNDAANAIEQAVNYALEQGYRTTDLAGNGKAISTDEMGSTIARYIAEGV.

Residue 78-91 (GPKWEHLPPAEQPE) coordinates NAD(+). 4 residues coordinate substrate: R99, R109, R138, and D227. D227, D251, and D255 together coordinate Mg(2+). Position 285–297 (285–297 (GSAPDIAGKGIAN)) interacts with NAD(+).

This sequence belongs to the isocitrate and isopropylmalate dehydrogenases family. LeuB type 1 subfamily. As to quaternary structure, homodimer. It depends on Mg(2+) as a cofactor. Mn(2+) is required as a cofactor.

Its subcellular location is the cytoplasm. The enzyme catalyses (2R,3S)-3-isopropylmalate + NAD(+) = 4-methyl-2-oxopentanoate + CO2 + NADH. The protein operates within amino-acid biosynthesis; L-leucine biosynthesis; L-leucine from 3-methyl-2-oxobutanoate: step 3/4. Catalyzes the oxidation of 3-carboxy-2-hydroxy-4-methylpentanoate (3-isopropylmalate) to 3-carboxy-4-methyl-2-oxopentanoate. The product decarboxylates to 4-methyl-2 oxopentanoate. The polypeptide is 3-isopropylmalate dehydrogenase (Photorhabdus laumondii subsp. laumondii (strain DSM 15139 / CIP 105565 / TT01) (Photorhabdus luminescens subsp. laumondii)).